A 464-amino-acid chain; its full sequence is Divalent metal cation transporter MntH (464 aa).

Helical transmembrane passes span 57 to 77 (ILIAVGYMDPGNWITSIAGGA), 82 to 102 (SLLSVILISSLIAMLLQSMAA), 125 to 145 (GIILWLITESAIMATDVAEII), 157 to 177 (IPLVVGILITTADVLILLLLM), 186 to 206 (AIVATLVAVILLVFTYEVFLA), 229 to 249 (MLYLALGIVGATVMPHDLYLG), 281 to 301 (LTIAFIVNSLLLILGAALFFG), 321 to 341 (IVGAIASPMLSMLFAVALLSS), 376 to 396 (LLSVTPVLIFAIYYHGNEAKI), 399 to 419 (LLTLSQVFLSVALPFAIVPLV), and 443 to 463 (VATVVLVSLNIYLILQTVGVI).

Belongs to the NRAMP family.

The protein localises to the cell membrane. In terms of biological role, h(+)-stimulated, divalent metal cation uptake system. This Levilactobacillus brevis (Lactobacillus brevis) protein is Divalent metal cation transporter MntH.